A 154-amino-acid polypeptide reads, in one-letter code: MAQSINITELNLPQLEMLKNQLDQEVEFLSTSIAQLKVVQTKYVEAKDCLNVLNKSNEGKELLVPLTSSMYVPGKLHDVEHVLIDVGTGYYVEKTAEDAKDFFKRKIDFLTKQMEKIQPALQEKHAMKQAVMEMMSQKIQQLTALGAAQATVKA.

At A2 the chain carries N-acetylalanine. N6-acetyllysine is present on K42. Residue S56 is modified to Phosphoserine.

The protein belongs to the prefoldin subunit alpha family. Heterohexamer of two PFD-alpha type and four PFD-beta type subunits.

Its subcellular location is the nucleus. Binds specifically to cytosolic chaperonin (c-CPN) and transfers target proteins to it. Binds to nascent polypeptide chain and promotes folding in an environment in which there are many competing pathways for nonnative proteins. Represses the transcriptional activity of MYC. This is Prefoldin subunit 5 (Pfdn5) from Mus musculus (Mouse).